The primary structure comprises 200 residues: Probable gluconokinase (200 aa).

Position 34–41 (34–41) interacts with ATP; it reads GVSGSGKT.

It belongs to the gluconokinase GntK/GntV family.

It catalyses the reaction D-gluconate + ATP = 6-phospho-D-gluconate + ADP + H(+). Its pathway is carbohydrate acid metabolism; D-gluconate degradation. This is Probable gluconokinase from Dictyostelium discoideum (Social amoeba).